The chain runs to 920 residues: Plasma membrane ATPase (920 aa).

Over residues 1 to 11 (MSDERITEKPP) the composition is skewed to basic and acidic residues. The interval 1–71 (MSDERITEKP…AEEDDGPAAA (71 aa)) is disordered. Topologically, residues 1–117 (MSDERITEKP…REESENLLVK (117 aa)) are cytoplasmic. A compositionally biased stretch (acidic residues) spans 17–50 (SEGEPVPEEEVEEETEEEVPDEQSSEDDDIDGLI). The helical transmembrane segment at 118-138 (FLMFFIGPIQFVMEAAAVLAA) threads the bilayer. The Extracellular segment spans residues 139–142 (GLED). Residues 143-162 (WVDFGVICGLLFLNAGVGFI) form a helical membrane-spanning segment. Residues 163–293 (QEFQAGSIVE…GQGHFTEVLN (131 aa)) are Cytoplasmic-facing. A helical transmembrane segment spans residues 294–315 (GIGVILLVLVVITLLLIWTACF). Over 316-326 (YRTVRIVPILR) the chain is Extracellular. The chain crosses the membrane as a helical span at residues 327-349 (YTLGITIVGVPVGLPAVVTTTMA). Over 350–721 (GGAAYLAKKQ…IAILNHSLDI (372 aa)) the chain is Cytoplasmic. Asp-380 serves as the catalytic 4-aspartylphosphate intermediate. Asp-636 and Asp-640 together coordinate Mg(2+). Residues 722–740 (DLIVFIAIFADVATLAIAY) form a helical membrane-spanning segment. Residues 741–756 (DNAPFSPSPVKWNLPR) lie on the Extracellular side of the membrane. The chain crosses the membrane as a helical span at residues 757 to 776 (LWGMSIMMGIILAAGTWITL). Residues 777 to 826 (TTMFLPKGGIIQNFGSIDGILFLEISLTENWLIFITRAVGPFWSSIPSWQ) are Cytoplasmic-facing. Residues 827 to 847 (LAGAVFVVDVVATMFTLFGWW) form a helical membrane-spanning segment. Over 848–859 (SQNWTDIVTVVR) the chain is Extracellular. The helical transmembrane segment at 860-876 (IYIWSIGIFCCLGGAYY) threads the bilayer. Topologically, residues 877–920 (LMSESETFDRLMNGKPLKENKSTRSVEDFLASMRRVSTQHEKGN) are cytoplasmic.

The protein belongs to the cation transport ATPase (P-type) (TC 3.A.3) family. Type IIIA subfamily.

It is found in the cell membrane. The enzyme catalyses ATP + H2O + H(+)(in) = ADP + phosphate + 2 H(+)(out). Its function is as follows. The plasma membrane ATPase of plants and fungi is a hydrogen ion pump. The proton gradient it generates drives the active transport of nutrients by H(+)-symport. The resulting external acidification and/or internal alkinization may mediate growth responses. This Zygosaccharomyces rouxii protein is Plasma membrane ATPase.